We begin with the raw amino-acid sequence, 483 residues long: ATP synthase subunit beta (483 aa).

Position 168-175 (168-175 (GGAGVGKT)) interacts with ATP.

It belongs to the ATPase alpha/beta chains family. F-type ATPases have 2 components, CF(1) - the catalytic core - and CF(0) - the membrane proton channel. CF(1) has five subunits: alpha(3), beta(3), gamma(1), delta(1), epsilon(1). CF(0) has three main subunits: a(1), b(2) and c(9-12). The alpha and beta chains form an alternating ring which encloses part of the gamma chain. CF(1) is attached to CF(0) by a central stalk formed by the gamma and epsilon chains, while a peripheral stalk is formed by the delta and b chains.

The protein localises to the cell membrane. The enzyme catalyses ATP + H2O + 4 H(+)(in) = ADP + phosphate + 5 H(+)(out). Its function is as follows. Produces ATP from ADP in the presence of a proton gradient across the membrane. The catalytic sites are hosted primarily by the beta subunits. This chain is ATP synthase subunit beta, found in Mycobacterium ulcerans (strain Agy99).